The following is an 88-amino-acid chain: Gas vesicle protein A2 (88 aa).

It belongs to the gas vesicle GvpA family. In terms of assembly, the gas vesicle shell is 2 nm thick and consists of a single layer of this protein. It forms helical ribs nearly perpendicular to the long axis of the vesicle.

It localises to the gas vesicle shell. In terms of biological role, gas vesicles are hollow, gas filled proteinaceous nanostructures found in some microorganisms. During planktonic growth they allow positioning of the organism at a favorable depth for light or nutrient acquisition. GvpA forms the protein shell. Its function is as follows. It is not clear if the 2 type A proteins in this organism are functionally redundant. When a minimal gvp locus (gvpA2-gvpR-gvpN-gvpF-gvpG-gvpL-gvpS-gvpK-gvpJ-gvpT-gvpU, called pNL29) is expressed in E.coli gas vesicles are made. In Priestia megaterium (Bacillus megaterium), this protein is Gas vesicle protein A2.